We begin with the raw amino-acid sequence, 385 residues long: Glucose-fructose oxidoreductase domain-containing protein 2 (385 aa).

Residues M1–A25 form the signal peptide.

Belongs to the Gfo/Idh/MocA family.

It localises to the secreted. It is found in the extracellular space. The protein resides in the extracellular matrix. In terms of biological role, promotes matrix assembly. This is Glucose-fructose oxidoreductase domain-containing protein 2 (GFOD2) from Homo sapiens (Human).